Consider the following 152-residue polypeptide: Probable ribose-5-phosphate isomerase B (152 aa).

10–11 lines the D-ribulose 5-phosphate pocket; sequence DH. Cysteine 69 acts as the Proton acceptor in catalysis. Position 70–74 (70–74) interacts with D-ribulose 5-phosphate; sequence GTGVG. Histidine 102 acts as the Proton donor in catalysis. D-ribulose 5-phosphate contacts are provided by aspartate 103, arginine 113, arginine 136, and arginine 140.

This sequence belongs to the LacAB/RpiB family. In terms of assembly, homodimer.

It catalyses the reaction aldehydo-D-ribose 5-phosphate = D-ribulose 5-phosphate. The protein operates within carbohydrate degradation; pentose phosphate pathway; D-ribose 5-phosphate from D-ribulose 5-phosphate (non-oxidative stage): step 1/1. Functionally, catalyzes the interconversion of ribulose-5-P and ribose-5-P. This is Probable ribose-5-phosphate isomerase B from Mycoplasma genitalium (strain ATCC 33530 / DSM 19775 / NCTC 10195 / G37) (Mycoplasmoides genitalium).